The chain runs to 517 residues: Methylmalonyl-CoA decarboxylase subunit alpha (517 aa).

The region spanning 4–260 (AAKKIQDLQK…NNMEKAPEFG (257 aa)) is the CoA carboxyltransferase N-terminal domain. Residues 271 to 513 (ELDALMPDNP…REKLPAKKHG (243 aa)) enclose the CoA carboxyltransferase C-terminal domain.

Belongs to the AccD/PCCB family. As to quaternary structure, the methylmalonyl-CoA decarboxylase is composed of four subunits: the carboxyltransferase alpha subunit (MmdA), the tunnel beta subunit (MmdB), the biotin-containing gamma subunit (MmdC) and the delta subunit (MmdD).

The protein localises to the cell membrane. It catalyses the reaction (S)-methylmalonyl-CoA + Na(+)(in) + H(+)(out) = propanoyl-CoA + Na(+)(out) + CO2. Functionally, carboxyltransferase subunit of the sodium ion pump methylmalonyl-CoA decarboxylase, which converts the chemical energy of a decarboxylation reaction into an electrochemical gradient of Na(+) ions across the cytoplasmic membrane, thereby creating a sodium ion motive force that is used for ATP synthesis. The alpha subunit catalyzes the Na(+)-independent carboxyltransfer from methylmalonyl-CoA to the prosthetic biotin group located on the gamma subunit. The chain is Methylmalonyl-CoA decarboxylase subunit alpha from Propionigenium modestum.